Here is a 434-residue protein sequence, read N- to C-terminus: Bifunctional protein GlmU (434 aa).

Residues 1-226 are pyrophosphorylase; that stretch reads MNKNKISIVI…ENEYKGVNSK (226 aa). Residues 11 to 14, Lys25, Gln77, and 84 to 85 contribute to the UDP-N-acetyl-alpha-D-glucosamine site; these read LAAG and GT. Residue Asp105 participates in Mg(2+) binding. The UDP-N-acetyl-alpha-D-glucosamine site is built by Gly138, Glu152, Asn167, and Asn224. Position 224 (Asn224) interacts with Mg(2+). The segment at 227–247 is linker; sequence KDLSDAEIIMQDKIKNSLMES. Residues 248-434 form an N-acetyltransferase region; the sequence is GVTMQLPSTI…DFYYKFFAKK (187 aa). The UDP-N-acetyl-alpha-D-glucosamine site is built by Arg311 and Lys328. The active-site Proton acceptor is His339. UDP-N-acetyl-alpha-D-glucosamine-binding residues include Tyr342 and Asn353. Residues Ala356, 362–363, Ser381, and Ala399 each bind acetyl-CoA; that span reads NY.

The protein in the N-terminal section; belongs to the N-acetylglucosamine-1-phosphate uridyltransferase family. This sequence in the C-terminal section; belongs to the transferase hexapeptide repeat family. As to quaternary structure, homotrimer. It depends on Mg(2+) as a cofactor.

It localises to the cytoplasm. The enzyme catalyses alpha-D-glucosamine 1-phosphate + acetyl-CoA = N-acetyl-alpha-D-glucosamine 1-phosphate + CoA + H(+). It catalyses the reaction N-acetyl-alpha-D-glucosamine 1-phosphate + UTP + H(+) = UDP-N-acetyl-alpha-D-glucosamine + diphosphate. It functions in the pathway nucleotide-sugar biosynthesis; UDP-N-acetyl-alpha-D-glucosamine biosynthesis; N-acetyl-alpha-D-glucosamine 1-phosphate from alpha-D-glucosamine 6-phosphate (route II): step 2/2. Its pathway is nucleotide-sugar biosynthesis; UDP-N-acetyl-alpha-D-glucosamine biosynthesis; UDP-N-acetyl-alpha-D-glucosamine from N-acetyl-alpha-D-glucosamine 1-phosphate: step 1/1. It participates in bacterial outer membrane biogenesis; LPS lipid A biosynthesis. Its function is as follows. Catalyzes the last two sequential reactions in the de novo biosynthetic pathway for UDP-N-acetylglucosamine (UDP-GlcNAc). The C-terminal domain catalyzes the transfer of acetyl group from acetyl coenzyme A to glucosamine-1-phosphate (GlcN-1-P) to produce N-acetylglucosamine-1-phosphate (GlcNAc-1-P), which is converted into UDP-GlcNAc by the transfer of uridine 5-monophosphate (from uridine 5-triphosphate), a reaction catalyzed by the N-terminal domain. The protein is Bifunctional protein GlmU of Sulfurimonas denitrificans (strain ATCC 33889 / DSM 1251) (Thiomicrospira denitrificans (strain ATCC 33889 / DSM 1251)).